We begin with the raw amino-acid sequence, 389 residues long: Large ribosomal subunit protein uL3 (389 aa).

Belongs to the universal ribosomal protein uL3 family.

It localises to the cytoplasm. The protein is Large ribosomal subunit protein uL3 (RPL3) of Debaryomyces hansenii (strain ATCC 36239 / CBS 767 / BCRC 21394 / JCM 1990 / NBRC 0083 / IGC 2968) (Yeast).